Consider the following 188-residue polypeptide: dCTP deaminase (188 aa).

Residues 111–116 (KSTYAR), 135–137 (TLE), glutamine 156, tyrosine 170, and glutamine 180 contribute to the dCTP site. Glutamate 137 serves as the catalytic Proton donor/acceptor.

Belongs to the dCTP deaminase family. As to quaternary structure, homotrimer.

It catalyses the reaction dCTP + H2O + H(+) = dUTP + NH4(+). Its pathway is pyrimidine metabolism; dUMP biosynthesis; dUMP from dCTP (dUTP route): step 1/2. In terms of biological role, catalyzes the deamination of dCTP to dUTP. The sequence is that of dCTP deaminase from Nitrosococcus oceani (strain ATCC 19707 / BCRC 17464 / JCM 30415 / NCIMB 11848 / C-107).